A 230-amino-acid chain; its full sequence is Ion-translocating oxidoreductase complex subunit E (230 aa).

The next 5 helical transmembrane spans lie at 22–42, 63–83, 86–106, 125–145, and 182–202; these read LLGLCPLLAVTSTATNALGLG, TPAEIRIPIYVMIIASVVSAV, LINAYAFGLYQSLGIFIPLIV, WLSALDGFSIGMGATGAMFVL, and PFLLAMLPPGAFIGLGLMLAV.

This sequence belongs to the NqrDE/RnfAE family. The complex is composed of six subunits: RsxA, RsxB, RsxC, RsxD, RsxE and RsxG.

Its subcellular location is the cell inner membrane. In terms of biological role, part of a membrane-bound complex that couples electron transfer with translocation of ions across the membrane. Required to maintain the reduced state of SoxR. The polypeptide is Ion-translocating oxidoreductase complex subunit E (Salmonella paratyphi A (strain ATCC 9150 / SARB42)).